Consider the following 122-residue polypeptide: Large ribosomal subunit protein uL29 (122 aa).

The residue at position 12 (S12) is a Phosphoserine.

It belongs to the universal ribosomal protein uL29 family. As to quaternary structure, component of the large ribosomal subunit (LSU). Mature yeast ribosomes consist of a small (40S) and a large (60S) subunit. The 40S small subunit contains 1 molecule of ribosomal RNA (18S rRNA) and at least 33 different proteins. The large 60S subunit contains 3 rRNA molecules (25S, 5.8S and 5S rRNA) and at least 46 different proteins. uL29 is associated with the polypeptide exit tunnel.

Its subcellular location is the cytoplasm. The protein localises to the nucleus. The protein resides in the nucleolus. Its function is as follows. Component of the ribosome, a large ribonucleoprotein complex responsible for the synthesis of proteins in the cell. The small ribosomal subunit (SSU) binds messenger RNAs (mRNAs) and translates the encoded message by selecting cognate aminoacyl-transfer RNA (tRNA) molecules. The large subunit (LSU) contains the ribosomal catalytic site termed the peptidyl transferase center (PTC), which catalyzes the formation of peptide bonds, thereby polymerizing the amino acids delivered by tRNAs into a polypeptide chain. The nascent polypeptides leave the ribosome through a tunnel in the LSU and interact with protein factors that function in enzymatic processing, targeting, and the membrane insertion of nascent chains at the exit of the ribosomal tunnel. In Schizosaccharomyces pombe (strain 972 / ATCC 24843) (Fission yeast), this protein is Large ribosomal subunit protein uL29 (rpl35).